Here is a 121-residue protein sequence, read N- to C-terminus: Protein yippee-like 5 (121 aa).

Positions 13–110 (RLFSCANCDT…LERALVRESE (98 aa)) constitute a Yippee domain. Positions 17, 20, 73, and 76 each coordinate Zn(2+). Ser118 carries the post-translational modification Phosphoserine.

It belongs to the yippee family. Identified in the CTLH complex that contains GID4, RANBP9 and/or RANBP10, MKLN1, MAEA, RMND5A (or alternatively its paralog RMND5B), GID8, ARMC8, WDR26 and YPEL5. Within this complex, MAEA, RMND5A (or alternatively its paralog RMND5B), GID8, WDR26, and RANBP9 and/or RANBP10 form the catalytic core, while GID4, MKLN1, ARMC8 and YPEL5 have ancillary roles. Interacts with RANBP9 and RANBP10.

Its subcellular location is the nucleus. It localises to the cytoplasm. The protein resides in the cytoskeleton. It is found in the microtubule organizing center. The protein localises to the centrosome. Its subcellular location is the spindle pole. It localises to the midbody. Component of the CTLH E3 ubiquitin-protein ligase complex that selectively accepts ubiquitin from UBE2H and mediates ubiquitination and subsequent proteasomal degradation of the transcription factor HBP1. Required for normal cell proliferation. The chain is Protein yippee-like 5 (YPEL5) from Bos taurus (Bovine).